The sequence spans 389 residues: MSDIAPVTNTPYIPPTPEVGLPLWLLAELTYRCPLQCPYCSNPLDFAKQGQELSTEQWFKVMQEAREMGAAQIGFSGGEPLVRQDLAELIAEARRLGFYTNLITSGIGLTEEKIIAFKEAGLDHIQISFQASDEQVNNMLAGSKKAFAQKLEMARAVKRHGYPMVLNFVTHRHNIDRIDKIIELCLALEADFVELATCQFYGWAHLNRLGLLPTKDQLVRAEAVTNEYRARLEAENHPCKLIFVTPDYYEERPKACMNGWGNIFLTVTPDGTALPCHGARQMPIQFPNVRDHSMQHIWYDSFGFNRFRGYDWMPEPCRSCDEKEKDFGGCRCQAFMLTGDAANADPVCSKSYHHGIITQARDESETATQTIEELAFRNDRNSRLIAKSS.

The Radical SAM core domain maps to 19-234 (VGLPLWLLAE…TNEYRARLEA (216 aa)). The [4Fe-4S] cluster site is built by cysteine 33, cysteine 37, and cysteine 40.

Belongs to the radical SAM superfamily. PqqE family. Interacts with PqqD. The interaction is necessary for activity of PqqE. It depends on [4Fe-4S] cluster as a cofactor.

It catalyses the reaction [PQQ precursor protein] + S-adenosyl-L-methionine = E-Y cross-linked-[PQQ precursor protein] + 5'-deoxyadenosine + L-methionine + H(+). Its pathway is cofactor biosynthesis; pyrroloquinoline quinone biosynthesis. Its function is as follows. Catalyzes the cross-linking of a glutamate residue and a tyrosine residue in the PqqA protein as part of the biosynthesis of pyrroloquinoline quinone (PQQ). This is PqqA peptide cyclase from Pseudomonas syringae pv. syringae (strain B728a).